Reading from the N-terminus, the 258-residue chain is uncharacterized protein (258 aa).

One can recognise an HTH deoR-type domain in the interval 3-58 (VAERQQKIVEIVNMRSSIRVSELSDIFSVTEETIRRDLEKLEKEHKLSRSHGGAVS). Positions 20–39 (IRVSELSDIFSVTEETIRRD) form a DNA-binding region, H-T-H motif.

This is an uncharacterized protein from Bacillus subtilis (strain 168).